A 358-amino-acid chain; its full sequence is Alanine racemase (358 aa).

Catalysis depends on lysine 35, which acts as the Proton acceptor; specific for D-alanine. At lysine 35 the chain carries N6-(pyridoxal phosphate)lysine. Arginine 130 lines the substrate pocket. The active-site Proton acceptor; specific for L-alanine is tyrosine 255. Residue methionine 303 coordinates substrate.

It belongs to the alanine racemase family. Pyridoxal 5'-phosphate is required as a cofactor.

It catalyses the reaction L-alanine = D-alanine. The protein operates within amino-acid biosynthesis; D-alanine biosynthesis; D-alanine from L-alanine: step 1/1. In terms of biological role, catalyzes the interconversion of L-alanine and D-alanine. May also act on other amino acids. This chain is Alanine racemase (alr), found in Shewanella baltica (strain OS195).